Here is a 333-residue protein sequence, read N- to C-terminus: Taste receptor type 2 member 110 (333 aa).

Residues 1 to 13 (MFSQIISTSDIFT) lie on the Extracellular side of the membrane. Residues 14–34 (FTIILFVELVIGILGNGFIAL) traverse the membrane as a helical segment. Residues 35–60 (VNIMDWTKRRSISSADQILTALAITR) are Cytoplasmic-facing. Residues 61–81 (FLYVWFMIICILLFMLCPHLL) form a helical membrane-spanning segment. Residues 82 to 89 (TRSEIVTS) are Extracellular-facing. The helical transmembrane segment at 90–110 (IGIIWIVNNHFSVWLATCLGV) threads the bilayer. The Cytoplasmic segment spans residues 111 to 133 (FYFLKIANFSNSLFLYLKWRVKK). Residues 134-154 (VVLMIIQVSMIFLILNLLSLS) form a helical membrane-spanning segment. The Extracellular portion of the chain corresponds to 155 to 205 (MYDQFSIDVYEGNTSYNLGDSTPFPTISLFINSSKVFVITNSSHIFLPINS). N-linked (GlcNAc...) asparagine glycans are attached at residues N186 and N195. A helical transmembrane segment spans residues 206–226 (LFMLIPFTVSLVAFLMLIFSL). Residues 227 to 255 (WKHHKKMQVNAKPPRDASTMAHIKALQTG) are Cytoplasmic-facing. Residues 256 to 276 (FSFLLLYAVYLLFIVIGMLSL) traverse the membrane as a helical segment. Residues 277–283 (RLIGGKL) lie on the Extracellular side of the membrane. Residues 284 to 304 (ILLFDHISGIGFPISHSFVLI) form a helical membrane-spanning segment. Residues 305-333 (LGNNKLRQASLSVLHCLRCRSKDMDTMGP) are Cytoplasmic-facing.

It belongs to the G-protein coupled receptor T2R family.

It localises to the membrane. Functionally, gustducin-coupled receptor implicated in the perception of bitter compounds in the oral cavity and the gastrointestinal tract. Signals through PLCB2 and the calcium-regulated cation channel TRPM5. The sequence is that of Taste receptor type 2 member 110 from Mus musculus (Mouse).